The sequence spans 526 residues: Microphthalmia-associated transcription factor (526 aa).

Position 5 is a phosphoserine; by MTOR (serine 5). 2 disordered regions span residues 20 to 54 and 155 to 179; these read EPKT…STMT and VLSS…SAPN. Residues 34–44 are compositionally biased toward low complexity; it reads SSSSAEHSGAS. Residue serine 180 is modified to Phosphoserine; by MAPK. Residues 224-291 are transactivation; it reads DDVIDDIISL…PANLPNIKRE (68 aa). A Phosphoserine modification is found at serine 280. Lysine 289 is covalently cross-linked (Glycyl lysine isopeptide (Lys-Gly) (interchain with G-Cter in SUMO)). The bHLH domain maps to 311–364; the sequence is QKKDNHNLIERRRRFNINDRIKELGTLIPKSNDPDMRWNKGTILKASVDYIRKL. The stretch at 355-401 forms a coiled coil; sequence KASVDYIRKLQREQQRAKDLENRQKKLEHANRHLLLRVQELEMQARA. A leucine-zipper region spans residues 374-395; sequence LENRQKKLEHANRHLLLRVQEL. The DNA-binding regulation stretch occupies residues 401–431; that stretch reads AHGLSLIPSTGLCSPDLVNRIIKQEPVLENC. Serine 405 carries the phosphoserine; by GSK3 modification. Residue serine 414 is modified to Phosphoserine. Lysine 423 is covalently cross-linked (Glycyl lysine isopeptide (Lys-Gly) (interchain with G-Cter in SUMO)). Serine 491 bears the Phosphoserine mark. Positions 496-526 are disordered; it reads TDPLLSSVSPGASKTSSRRSSMSAEETEHAC. Low complexity predominate over residues 507–519; that stretch reads ASKTSSRRSSMSA. Phosphoserine; by RPS6KA1 is present on serine 516.

The protein belongs to the MiT/TFE family. As to quaternary structure, homodimer or heterodimer; dimerization is mediated via the coiled coil region. Efficient DNA binding requires dimerization with another bHLH protein. Binds DNA in the form of homodimer or heterodimer with either TFE3, TFEB or TFEC. Interacts with small GTPases Rag (RagA/RRAGA, RagB/RRAGB, RagC/RRAGC and/or RagD/RRAGD); promoting its recruitment to lysosomal membrane in the presence of nutrients. Interacts with KARS1. Identified in a complex with HINT1 and CTNNB1. Interacts with VSX2. Post-translationally, when nutrients are present, phosphorylation by MTOR at Ser-5 via non-canonical mTORC1 pathway promotes ubiquitination by the SCF(BTRC) complex, followed by degradation. Phosphorylation at Ser-405 significantly enhances the ability to bind the tyrosinase promoter. Phosphorylation by MARK3/cTAK1 at Ser-280 promotes association with 14-3-3/YWHA adapters and retention in the cytosol. Phosphorylated at Ser-180 and Ser-516 following KIT signaling, triggering a short live activation: Phosphorylation at Ser-180 and Ser-516 by MAPK and RPS6KA1, respectively, activate the transcription factor activity but also promote ubiquitination and subsequent degradation by the proteasome. Phosphorylated in response to blue light (415nm). Ubiquitinated by the SCF(BTRC) and SCF(FBXW11) complexes following phosphorylation ar Ser-5 by MTOR, leading to its degradation by the proteasome. Ubiquitinated following phosphorylation at Ser-180, leading to subsequent degradation by the proteasome. Deubiquitinated by USP13, preventing its degradation. As to expression, in the adult, expressed at high levels in the heart, skin, skeletal muscle, intestine, stomach, kidney, ovary, lung, spleen and brain. In the embryo, expressed in developing eye, ear, skin and heart. Isoform M is expressed in melanocytes and also in the embryonic and adult heart while isoform A and isoform H are more widely expressed.

The protein localises to the nucleus. Its subcellular location is the cytoplasm. It is found in the lysosome membrane. Transcription factor that acts as a master regulator of melanocyte survival and differentiation as well as melanosome biogenesis. Binds to M-boxes (5'-TCATGTG-3') and symmetrical DNA sequences (E-boxes) (5'-CACGTG-3') found in the promoter of pigmentation genes, such as tyrosinase (TYR). Involved in the cellular response to amino acid availability by acting downstream of MTOR: in the presence of nutrients, MITF phosphorylation by MTOR promotes its inactivation. Upon starvation or lysosomal stress, inhibition of MTOR induces MITF dephosphorylation, resulting in transcription factor activity. Plays an important role in melanocyte development by regulating the expression of tyrosinase (TYR) and tyrosinase-related protein 1 (TYRP1). Plays a critical role in the differentiation of various cell types, such as neural crest-derived melanocytes, mast cells, osteoclasts and optic cup-derived retinal pigment epithelium. This is Microphthalmia-associated transcription factor (Mitf) from Mus musculus (Mouse).